The following is an 878-amino-acid chain: Alanine--tRNA ligase (878 aa).

Zn(2+) is bound by residues His566, His570, Cys668, and His672.

Belongs to the class-II aminoacyl-tRNA synthetase family. It depends on Zn(2+) as a cofactor.

Its subcellular location is the cytoplasm. The enzyme catalyses tRNA(Ala) + L-alanine + ATP = L-alanyl-tRNA(Ala) + AMP + diphosphate. Functionally, catalyzes the attachment of alanine to tRNA(Ala) in a two-step reaction: alanine is first activated by ATP to form Ala-AMP and then transferred to the acceptor end of tRNA(Ala). Also edits incorrectly charged Ser-tRNA(Ala) and Gly-tRNA(Ala) via its editing domain. The chain is Alanine--tRNA ligase from Geobacillus thermodenitrificans (strain NG80-2).